We begin with the raw amino-acid sequence, 259 residues long: Small ribosomal subunit protein eS1 (259 aa).

2 disordered regions span residues 1–23 (MAVG…KTAD) and 235–259 (ESKS…VDSV). Basic residues predominate over residues 8-19 (KVTKGGKKGGKK). Over residues 246-259 (SRPDHYEPPKVDSV) the composition is skewed to basic and acidic residues.

Belongs to the eukaryotic ribosomal protein eS1 family. In terms of assembly, component of the small ribosomal subunit. Mature ribosomes consist of a small (40S) and a large (60S) subunit. The 40S subunit contains about 33 different proteins and 1 molecule of RNA (18S). The 60S subunit contains about 49 different proteins and 3 molecules of RNA (28S, 5.8S and 5S).

The protein localises to the cytoplasm. This Schistosoma japonicum (Blood fluke) protein is Small ribosomal subunit protein eS1.